A 259-amino-acid polypeptide reads, in one-letter code: Deoxyribose-phosphate aldolase (259 aa).

Aspartate 102 (proton donor/acceptor) is an active-site residue. Lysine 167 serves as the catalytic Schiff-base intermediate with acetaldehyde. Lysine 201 functions as the Proton donor/acceptor in the catalytic mechanism.

Belongs to the DeoC/FbaB aldolase family. DeoC type 2 subfamily.

Its subcellular location is the cytoplasm. It carries out the reaction 2-deoxy-D-ribose 5-phosphate = D-glyceraldehyde 3-phosphate + acetaldehyde. Its pathway is carbohydrate degradation; 2-deoxy-D-ribose 1-phosphate degradation; D-glyceraldehyde 3-phosphate and acetaldehyde from 2-deoxy-alpha-D-ribose 1-phosphate: step 2/2. Catalyzes a reversible aldol reaction between acetaldehyde and D-glyceraldehyde 3-phosphate to generate 2-deoxy-D-ribose 5-phosphate. In Escherichia coli O8 (strain IAI1), this protein is Deoxyribose-phosphate aldolase.